A 555-amino-acid polypeptide reads, in one-letter code: Formate--tetrahydrofolate ligase (555 aa).

Residue 64 to 71 coordinates ATP; it reads TPAGEGKT.

It belongs to the formate--tetrahydrofolate ligase family.

It carries out the reaction (6S)-5,6,7,8-tetrahydrofolate + formate + ATP = (6R)-10-formyltetrahydrofolate + ADP + phosphate. It participates in one-carbon metabolism; tetrahydrofolate interconversion. The polypeptide is Formate--tetrahydrofolate ligase (Allorhizobium ampelinum (strain ATCC BAA-846 / DSM 112012 / S4) (Agrobacterium vitis (strain S4))).